The following is a 168-amino-acid chain: MYSSHQNRAYGSRRLAKETAGALAQAETRGLISEVMYNEDQPWMTQLVLLPLLQQLGQQSRWQLWLTPQQRLSREWVESAGLPLTKVMQVSQMNPQVTLDSMIRALETGNYSVVIAWLHDDLTDDEHRRLTAAAEKGNAMGFLMRPVQPSLPGDRPRSALRIHSGMVH.

A ftsZ binding region spans residues 105–111 (ALETGNY). Positions 161–168 (RIHSGMVH) are lon protease binding.

This sequence belongs to the SulA family. In terms of assembly, interacts with FtsZ. Is rapidly cleaved and degraded by the Lon protease once DNA damage is repaired.

Functionally, component of the SOS system and an inhibitor of cell division. Accumulation of SulA causes rapid cessation of cell division and the appearance of long, non-septate filaments. In the presence of GTP, binds a polymerization-competent form of FtsZ in a 1:1 ratio, thus inhibiting FtsZ polymerization and therefore preventing it from participating in the assembly of the Z ring. This mechanism prevents the premature segregation of damaged DNA to daughter cells during cell division. This chain is Cell division inhibitor SulA, found in Cronobacter sakazakii (strain ATCC BAA-894) (Enterobacter sakazakii).